Consider the following 276-residue polypeptide: Alpha N-terminal protein methyltransferase 1 (276 aa).

Residues Gly-96, Arg-101, 118 to 120 (EPV), 149 to 150 (LQ), and Gln-165 contribute to the S-adenosyl-L-methionine site.

This sequence belongs to the methyltransferase superfamily. NTM1 family.

It carries out the reaction N-terminal L-alanyl-L-prolyl-L-lysyl-[protein] + 3 S-adenosyl-L-methionine = N-terminal N,N,N-trimethyl-L-alanyl-L-prolyl-L-lysyl-[protein] + 3 S-adenosyl-L-homocysteine + 3 H(+). The catalysed reaction is N-terminal L-seryl-L-prolyl-L-lysyl-[protein] + 3 S-adenosyl-L-methionine = N-terminal N,N,N-trimethyl-L-seryl-L-prolyl-L-lysyl-[protein] + 3 S-adenosyl-L-homocysteine + 3 H(+). It catalyses the reaction N-terminal L-prolyl-L-prolyl-L-lysyl-[protein] + 2 S-adenosyl-L-methionine = N-terminal N,N-dimethyl-L-prolyl-L-prolyl-L-lysyl-[protein] + 2 S-adenosyl-L-homocysteine + 2 H(+). Its function is as follows. Alpha-N-methyltransferase that methylates the N-terminus of target proteins containing the N-terminal motif [Ala/Pro/Ser]-Pro-Lys when the initiator Met is cleaved. Specifically catalyzes mono-, di- or tri-methylation of exposed alpha-amino group of Ala or Ser residue in the [Ala/Ser]-Pro-Lys motif and mono- or di-methylation of Pro in the Pro-Pro-Lys motif. In Arabidopsis thaliana (Mouse-ear cress), this protein is Alpha N-terminal protein methyltransferase 1.